The chain runs to 185 residues: Hypoxanthine/guanine phosphoribosyltransferase (185 aa).

Belongs to the purine/pyrimidine phosphoribosyltransferase family. Archaeal HPRT subfamily. Homodimer.

The protein resides in the cytoplasm. It catalyses the reaction IMP + diphosphate = hypoxanthine + 5-phospho-alpha-D-ribose 1-diphosphate. The catalysed reaction is GMP + diphosphate = guanine + 5-phospho-alpha-D-ribose 1-diphosphate. Its pathway is purine metabolism; IMP biosynthesis via salvage pathway; IMP from hypoxanthine: step 1/1. Catalyzes a salvage reaction resulting in the formation of IMP that is energically less costly than de novo synthesis. The polypeptide is Hypoxanthine/guanine phosphoribosyltransferase (Methanococcus maripaludis (strain C6 / ATCC BAA-1332)).